Consider the following 54-residue polypeptide: Large ribosomal subunit protein bL33 (54 aa).

The protein belongs to the bacterial ribosomal protein bL33 family.

This chain is Large ribosomal subunit protein bL33, found in Opitutus terrae (strain DSM 11246 / JCM 15787 / PB90-1).